Consider the following 273-residue polypeptide: Tryptophan synthase alpha chain (273 aa).

Residues Glu56 and Asp67 each act as proton acceptor in the active site.

This sequence belongs to the TrpA family. As to quaternary structure, tetramer of two alpha and two beta chains.

It catalyses the reaction (1S,2R)-1-C-(indol-3-yl)glycerol 3-phosphate + L-serine = D-glyceraldehyde 3-phosphate + L-tryptophan + H2O. It functions in the pathway amino-acid biosynthesis; L-tryptophan biosynthesis; L-tryptophan from chorismate: step 5/5. In terms of biological role, the alpha subunit is responsible for the aldol cleavage of indoleglycerol phosphate to indole and glyceraldehyde 3-phosphate. The sequence is that of Tryptophan synthase alpha chain from Shewanella baltica (strain OS155 / ATCC BAA-1091).